A 222-amino-acid chain; its full sequence is Triosephosphate isomerase (222 aa).

Substrate is bound at residue 9 to 11 (NFK). The active-site Electrophile is His93. Glu141 (proton acceptor) is an active-site residue. Substrate contacts are provided by residues Ile146, Gly181, and 202–203 (AS).

The protein belongs to the triosephosphate isomerase family. In terms of assembly, homotetramer; dimer of dimers.

The protein resides in the cytoplasm. It carries out the reaction D-glyceraldehyde 3-phosphate = dihydroxyacetone phosphate. Its pathway is carbohydrate biosynthesis; gluconeogenesis. It participates in carbohydrate degradation; glycolysis; D-glyceraldehyde 3-phosphate from glycerone phosphate: step 1/1. Its function is as follows. Involved in the gluconeogenesis. Catalyzes stereospecifically the conversion of dihydroxyacetone phosphate (DHAP) to D-glyceraldehyde-3-phosphate (G3P). The sequence is that of Triosephosphate isomerase from Methanothermus fervidus (strain ATCC 43054 / DSM 2088 / JCM 10308 / V24 S).